Consider the following 319-residue polypeptide: MNATTSAAAYGPLAGADLEAELAQARVADSDARDAAILEHDGSASVVPLARRRTSGTAPDDAVTLSGVSKRFGARTVLDNVELGIARGSFVAIVGRSGCGKSTLLRLVAGLEQPSSGALVTRGEGGGALDTRIMYQDARLLPWKTVLQNVMLGLGRGARDQARAVLDEVGLLERANDWPAQLSGGQRQRVALARALVHRPQLLLLDEPLGALDALTRIEMHALIERLWREHRFTALLVTHDVQEAVALGDRILLIEQGRVALDQAVPLDRPRARASAAFAALEDRVLKRVLAGGPGAADHDAEHEADKVRPVGQIRWAV.

Positions 63–282 constitute an ABC transporter domain; sequence VTLSGVSKRF…ARASAAFAAL (220 aa). 95 to 102 serves as a coordination point for ATP; sequence GRSGCGKS.

Belongs to the ABC transporter superfamily. Aliphatic sulfonates importer (TC 3.A.1.17.2) family. The complex is composed of two ATP-binding proteins (SsuB), two transmembrane proteins (SsuC) and a solute-binding protein (SsuA).

It is found in the cell inner membrane. It carries out the reaction ATP + H2O + aliphatic sulfonate-[sulfonate-binding protein]Side 1 = ADP + phosphate + aliphatic sulfonateSide 2 + [sulfonate-binding protein]Side 1.. Functionally, part of the ABC transporter complex SsuABC involved in aliphatic sulfonates import. Responsible for energy coupling to the transport system. The protein is Aliphatic sulfonates import ATP-binding protein SsuB 1 of Burkholderia cenocepacia (strain HI2424).